The chain runs to 274 residues: Pyrogallol hydroxytransferase small subunit (274 aa).

12 residues coordinate [4Fe-4S] cluster: C13, C16, C19, C23, C68, C71, C76, C109, C126, C129, C145, and C149.

In terms of assembly, heterodimer of a large and a small subunit. The cofactor is [4Fe-4S] cluster.

It catalyses the reaction 1,2,3,5-tetrahydroxybenzene + 1,2,3-trihydroxybenzene = 1,2,3,5-tetrahydroxybenzene + 1,3,5-trihydroxybenzene. In terms of biological role, isomerization of pyrogallol to phloroglucin. The chain is Pyrogallol hydroxytransferase small subunit (bthL) from Pelobacter acidigallici.